The sequence spans 740 residues: Pheromone-regulated membrane protein 10 (740 aa).

Disordered stretches follow at residues 1–48, 65–97, and 241–269; these read MGKN…RSGL, FADE…KEEC, and NQPG…PTGE. Basic and acidic residues predominate over residues 7-18; that stretch reads QAAEGEEARRGS. Over residues 19 to 33 the composition is skewed to low complexity; it reads ESSGSSAEPSGAVAE. Residues 67–76 are compositionally biased toward acidic residues; sequence DEDEVVEQDE. Positions 256–267 are enriched in polar residues; sequence SAQTLSSETLPT. 10 helical membrane passes run 422–442, 445–465, 475–495, 499–519, 541–561, 574–594, 599–619, 622–642, 651–671, and 707–727; these read AWMC…FAFG, WINL…QFIV, VFEI…GSIP, ICFG…YIIL, IIYS…FGWI, ELSP…LSLI, WSQI…TYWS, HFTA…GIMG, GLAM…GIAS, and ITMI…TLVV.

This sequence belongs to the ThrE exporter (TC 2.A.79) family.

The protein resides in the membrane. This chain is Pheromone-regulated membrane protein 10, found in Eremothecium gossypii (strain ATCC 10895 / CBS 109.51 / FGSC 9923 / NRRL Y-1056) (Yeast).